The chain runs to 46 residues: Transcriptional regulator SEHBP (46 aa).

In terms of assembly, interacts with histone H2B. Also interacts with chromatin-binding proteins HMGN1 and HMGN3.

Its subcellular location is the nucleus. The protein localises to the cytoplasm. Plays a role in transcription regulation. The chain is Transcriptional regulator SEHBP from Homo sapiens (Human).